The sequence spans 137 residues: Crustacean hyperglycemic hormones (137 aa).

The N-terminal stretch at 1-28 (MVSFRTMWSLVVVVVVVAASLGSSGVHG) is a signal peptide. Q64 carries the post-translational modification Pyrrolidone carboxylic acid. D-phenylalanine; in form CHH-II is present on F66. 3 cysteine pairs are disulfide-bonded: C70-C106, C86-C102, and C89-C115. Residue V135 is modified to Valine amide.

This sequence belongs to the arthropod CHH/MIH/GIH/VIH hormone family. In terms of tissue distribution, produced by the medulla terminalis X-organ in the eyestalks and transported to the sinus gland where they are stored and released.

It is found in the secreted. In terms of biological role, hormone found in the sinus gland of isopods and decapods which controls the blood sugar level. Has a secretagogue action over the amylase released from the midgut gland. May act as a stress hormone and may be involved in the control of molting and reproduction. The protein is Crustacean hyperglycemic hormones of Procambarus clarkii (Red swamp crayfish).